Reading from the N-terminus, the 604-residue chain is Kinesin-like protein KIN-14O (604 aa).

A coiled-coil region spans residues 22-61 (MLNHDKDISALQEEISALRSRQRHLDHRRQEALDKLIDLK). One can recognise a Kinesin motor domain in the interval 63–387 (SIRVFCRVRP…LSFAKRARSI (325 aa)). 141–148 (GQTGTGKT) lines the ATP pocket. The stretch at 383–443 (RARSIESSKE…EERKKLSSSA (61 aa)) forms a coiled coil. Disordered regions lie at residues 465–511 (DSAE…KTRL) and 565–604 (SNNSIDSTAASAPRRRESFISRPAQRAPLHQHRRRMSSLT). Over residues 565–574 (SNNSIDSTAA) the composition is skewed to polar residues. The segment covering 593–604 (LHQHRRRMSSLT) has biased composition (basic residues).

This sequence belongs to the TRAFAC class myosin-kinesin ATPase superfamily. Kinesin family. KIN-14 subfamily.

This is Kinesin-like protein KIN-14O from Oryza sativa subsp. japonica (Rice).